We begin with the raw amino-acid sequence, 230 residues long: uncharacterized protein (230 aa).

This is an uncharacterized protein from Sinorhizobium fredii (strain NBRC 101917 / NGR234).